A 150-amino-acid polypeptide reads, in one-letter code: MQVILLDKIGNLGGLGDQVNVKSGYARNFLIPQGKAVMATKDNVAMFETRRAELEAKVAEQLAASEARAESVNTLEGVTIASKAGDEGKLFGSIGTRDIADAITAAGVAVAKSEVRLPEGALRNIGEFEVSIQLHSEVFATAKIAIVAAE.

This sequence belongs to the bacterial ribosomal protein bL9 family.

Functionally, binds to the 23S rRNA. The polypeptide is Large ribosomal subunit protein bL9 (Vibrio atlanticus (strain LGP32) (Vibrio splendidus (strain Mel32))).